We begin with the raw amino-acid sequence, 349 residues long: Methylthioribose-1-phosphate isomerase (349 aa).

Residues 49–51, R93, and Q201 contribute to the substrate site; that span reads RGA. D242 acts as the Proton donor in catalysis. 252–253 contacts substrate; the sequence is NK.

It belongs to the EIF-2B alpha/beta/delta subunits family. MtnA subfamily.

It carries out the reaction 5-(methylsulfanyl)-alpha-D-ribose 1-phosphate = 5-(methylsulfanyl)-D-ribulose 1-phosphate. It participates in amino-acid biosynthesis; L-methionine biosynthesis via salvage pathway; L-methionine from S-methyl-5-thio-alpha-D-ribose 1-phosphate: step 1/6. In terms of biological role, catalyzes the interconversion of methylthioribose-1-phosphate (MTR-1-P) into methylthioribulose-1-phosphate (MTRu-1-P). The protein is Methylthioribose-1-phosphate isomerase of Petrotoga mobilis (strain DSM 10674 / SJ95).